A 453-amino-acid polypeptide reads, in one-letter code: DDB1- and CUL4-associated factor 12 (453 aa).

Positions 1–12 are enriched in basic residues; sequence MARKAVSRKRKA. Residues 1-34 form a disordered region; that stretch reads MARKAVSRKRKASASPGAGSDAQGPQFGWDHSLH. A required for nuclear location and interaction with MOV10 region spans residues 1 to 38; that stretch reads MARKAVSRKRKASASPGAGSDAQGPQFGWDHSLHKRKR. Ser-15 carries the post-translational modification Phosphoserine. 4 WD repeats span residues 138 to 178, 182 to 220, 250 to 289, and 338 to 375; these read QQGC…PVCV, GHKD…LTKS, PDNC…SKLL, and ERGS…FLEE.

This sequence belongs to the WD repeat DCAF12 family. In terms of assembly, component of the DCX(DCAF12) E3 ubiquitin ligase complex, at least composed of CUL4 (CUL4A or CUL4B), DDB1, DCAF12 and RBX1.

It is found in the cytoplasm. Its subcellular location is the cytoskeleton. It localises to the microtubule organizing center. The protein resides in the centrosome. The protein localises to the nucleus. It participates in protein modification; protein ubiquitination. In terms of biological role, substrate-recognition component of a DCX (DDB1-CUL4-X-box) E3 ubiquitin-protein ligase complex of the DesCEND (destruction via C-end degrons) pathway, which recognizes a C-degron located at the extreme C terminus of target proteins, leading to their ubiquitination and degradation. The C-degron recognized by the DesCEND pathway is usually a motif of less than ten residues and can be present in full-length proteins, truncated proteins or proteolytically cleaved forms. The DCX(DCAF12) complex specifically recognizes proteins with a diglutamate (Glu-Glu) at the C-terminus, such as MAGEA3, MAGEA6 and CCT5, leading to their ubiquitination and degradation. Ubiquitination of MAGEA3, MAGEA6 by DCX(DCAF12) complex is required for starvation-induced autophagy. Also directly recognizes the C-terminal glutamate-leucine (Glu-Leu) degron as an alternative degron in proteins such as MOV10, leading to their ubiquitination and degradation. Controls the protein level of MOV10 during spermatogenesis and in T cells, especially after their activation. The sequence is that of DDB1- and CUL4-associated factor 12 from Mus musculus (Mouse).